The sequence spans 500 residues: Aldehyde dehydrogenase, mitochondrial (500 aa).

Lysine 35, lysine 56, and lysine 142 each carry N6-acetyllysine. Residue 245-250 (GSTEVG) participates in NAD(+) binding. The active-site Proton acceptor is glutamate 268. The active-site Nucleophile is cysteine 302. Lysine 358, lysine 366, lysine 409, lysine 411, lysine 424, and lysine 434 each carry N6-acetyllysine.

It belongs to the aldehyde dehydrogenase family. As to quaternary structure, homotetramer. In terms of processing, in response to mitochondrial stress, the precursor protein is ubiquitinated by the SIFI complex in the cytoplasm before mitochondrial import, leading to its degradation. Within the SIFI complex, UBR4 initiates ubiquitin chain that are further elongated or branched by KCMF1.

It localises to the mitochondrion matrix. It carries out the reaction an aldehyde + NAD(+) + H2O = a carboxylate + NADH + 2 H(+). It functions in the pathway alcohol metabolism; ethanol degradation; acetate from ethanol: step 2/2. Functionally, required for clearance of cellular formaldehyde, a cytotoxic and carcinogenic metabolite that induces DNA damage. This is Aldehyde dehydrogenase, mitochondrial (ALDH2) from Equus caballus (Horse).